The sequence spans 137 residues: MKLNLYVLTPKRIIWDCEVKEIILSTNSGQIGVLPNHAPINTAVDMGPLRIRLLNDQWLTAVLWSGFARIVNNEIIILGNDAELGSDIDPNEAQQALEIAEANLSKAEGTKELVEAKLALRRARIRIEAVNWIPPSN.

The protein belongs to the ATPase epsilon chain family. As to quaternary structure, F-type ATPases have 2 components, CF(1) - the catalytic core - and CF(0) - the membrane proton channel. CF(1) has five subunits: alpha(3), beta(3), gamma(1), delta(1), epsilon(1). CF(0) has three main subunits: a, b and c.

It localises to the plastid. It is found in the chloroplast thylakoid membrane. Functionally, produces ATP from ADP in the presence of a proton gradient across the membrane. The polypeptide is ATP synthase epsilon chain, chloroplastic (Agrostis stolonifera (Creeping bentgrass)).